Consider the following 896-residue polypeptide: DNA mismatch repair protein MutS (896 aa).

Position 618–625 (Gly-618–Ser-625) interacts with ATP. The segment covering Gly-805–Ser-825 has biased composition (basic and acidic residues). The disordered stretch occupies residues Gly-805–Asp-826.

The protein belongs to the DNA mismatch repair MutS family.

This protein is involved in the repair of mismatches in DNA. It is possible that it carries out the mismatch recognition step. This protein has a weak ATPase activity. This Halothermothrix orenii (strain H 168 / OCM 544 / DSM 9562) protein is DNA mismatch repair protein MutS.